The following is a 309-amino-acid chain: MLQLSKSPCMRTPATRSDSYELCRQITAQYAKTFYLGTQLMPLAKRQAIWAIYVWCRRTDELVDGPMASSTTLETLDHWEEQLESIFAGHPIEPVDVALVDTLGRFPLDIQPFRDMIAGQRMDLSRNRYNTFDELNLYCYRVAGTVGLMSLAVMGTAEPDLSVPWNRDQSIYYPKEEAIALGIANQLTNILRDVGEDARRGRIYLPLDDLALFNYTEADLLNGKVDERWRELMRFQIQRARKFYTLAEEGIAALHPDIRWPVWTALMLYRQILDEIERNEYDVFNQRAYVPTWKKMMCLPLAQLRARVL.

Belongs to the phytoene/squalene synthase family.

It carries out the reaction 2 (2E,6E,10E)-geranylgeranyl diphosphate = 15-cis-phytoene + 2 diphosphate. It functions in the pathway carotenoid biosynthesis; phytoene biosynthesis; all-trans-phytoene from geranylgeranyl diphosphate: step 1/1. In terms of biological role, catalyzes the reaction from prephytoene diphosphate to phytoene. This chain is Phytoene synthase (crtB), found in Arthrospira platensis (Spirulina platensis).